The chain runs to 207 residues: MNTEEIPVAPPLRGVTPALQWKVNNYSFGTRQARKLFPHYHPPTWLGNLYLPLRGMPHTGPGCYAAATDWNGLAYNLSKVPTSTKGYAIGARTAVRFKPISKDVTPYPGMYQKVDTLSEKHKKSFAPFNILMPRFRSAAKGDSYPGPGTYNPEMKSVPKVTWPMKFGSPDWSQVPCLEKRTLKAELSADKDFRKHRSRVAYFSLYYQ.

As to quaternary structure, interacts with proteins involved in ciliary transport, including ARL13B, CETN1, KIF3A, RAB6A, RAB8A, TUBB1 and TUBG1. Interacts with AURKA. In terms of tissue distribution, expressed in tissues rich in ciliated cells, such as lung, kidney, vas deferens and testis. Both isoforms 1 and 2 are expressed in testis.

The protein resides in the golgi apparatus. Its subcellular location is the golgi stack. The protein localises to the trans-Golgi network. It localises to the nucleus. It is found in the cytoplasm. The protein resides in the cytoplasmic vesicle. During primary cilia disassembly, involved in cilia disassembly. Required specifically to control cilia retraction as well as the liberation and duplication of the basal body/centrosome. May act by stimulating AURKA activity at the basal body in a cell cycle-dependent manner. This is Ciliary microtubule-associated protein 3 (Cimap3) from Mus musculus (Mouse).